Here is a 131-residue protein sequence, read N- to C-terminus: MSMSDPIADMLTRIRNAQVVQKTSVAMPSSKVKIAIANVLKDEGYIEDFAVTEAAGKAELKIGLKYYAGRPVIERLERVSRPGLRIYKGKDDIPNVMNGLGVAIVSTPKGVMTDRKARATGVGGEVICYVA.

It belongs to the universal ribosomal protein uS8 family. In terms of assembly, part of the 30S ribosomal subunit. Contacts proteins S5 and S12.

In terms of biological role, one of the primary rRNA binding proteins, it binds directly to 16S rRNA central domain where it helps coordinate assembly of the platform of the 30S subunit. The sequence is that of Small ribosomal subunit protein uS8 from Janthinobacterium sp. (strain Marseille) (Minibacterium massiliensis).